Here is a 584-residue protein sequence, read N- to C-terminus: Lamin-B1 (584 aa).

The disordered stretch occupies residues 1–22 (MAAAVAPLSPQPRGAAASAALS). Residues 2–33 (AAAVAPLSPQPRGAAASAALSPTRISRLQEKE) form a head region. Position 22 is a phosphoserine (Ser22). Positions 31–387 (EKEELRQLND…KLLESEEERL (357 aa)) constitute an IF rod domain. Residues 34–70 (ELRQLNDRLAVYIDKVRSLETENSALQRRVSEREQVC) are coil 1A. Residues 81-218 (FETELADARK…NVYEEEIKET (138 aa)) are coil 1B. Residues 243 to 385 (QALKEIREQH…YRKLLESEEE (143 aa)) form a coil 2 region. Residues 386–584 (RLRLSPGPSS…RKPERSCVVM (199 aa)) form a tail region. Disordered stretches follow at residues 388-431 (RLSP…SVSI) and 548-584 (TVNE…CVVM). Residues 394-408 (SSRVTVSRASSSRSV) show a composition bias toward low complexity. The Nuclear localization signal signature appears at 414–419 (KRKRID). In terms of domain architecture, LTD spans 429 to 545 (VSISHSASAT…EEVAQRSTVF (117 aa)). The span at 551-565 (EGEEEEEEGEEEILE) shows a compositional bias: acidic residues. Residues 575–584 (RKPERSCVVM) are compositionally biased toward basic and acidic residues. Cys581 carries the cysteine methyl ester modification. Residue Cys581 is the site of S-farnesyl cysteine attachment. The propeptide at 582 to 584 (VVM) is removed in mature form.

Belongs to the intermediate filament family. Homodimer. Lamin dimers then assemble into dimeric head-to-tail polymers. Ultimately, two head-to-tail polymers assemble laterally into a protofilament with a uniformly shaped rod of 3.5 nm in diameter. Phosphorylation plays a key role in lamin organization, subcellular localization and nuclear envelope disintegration. Phosphorylation by CDK1 at Ser-22 at the onset of mitosis drives lamin disassembly and nuclear envelope breakdown.

It localises to the nucleus lamina. The protein resides in the nucleus envelope. It is found in the nucleus. The protein localises to the nucleoplasm. Its subcellular location is the nucleus matrix. Its function is as follows. Lamins are intermediate filament proteins that assemble into a filamentous meshwork, and which constitute the major components of the nuclear lamina, a fibrous layer on the nucleoplasmic side of the inner nuclear membrane. Lamins provide a framework for the nuclear envelope, bridging the nuclear envelope and chromatin. Plays an important role in nuclear assembly, chromatin organization, nuclear membrane and telomere dynamics. The protein is Lamin-B1 (LMNB1) of Gallus gallus (Chicken).